A 362-amino-acid chain; its full sequence is Chorismate synthase (362 aa).

Arg46 contributes to the NADP(+) binding site. Residues 122-124, 238-239, Gly278, 293-297, and Arg319 contribute to the FMN site; these read RSS, NA, and KPTPS.

Belongs to the chorismate synthase family. Homotetramer. FMNH2 serves as cofactor.

It carries out the reaction 5-O-(1-carboxyvinyl)-3-phosphoshikimate = chorismate + phosphate. The protein operates within metabolic intermediate biosynthesis; chorismate biosynthesis; chorismate from D-erythrose 4-phosphate and phosphoenolpyruvate: step 7/7. Functionally, catalyzes the anti-1,4-elimination of the C-3 phosphate and the C-6 proR hydrogen from 5-enolpyruvylshikimate-3-phosphate (EPSP) to yield chorismate, which is the branch point compound that serves as the starting substrate for the three terminal pathways of aromatic amino acid biosynthesis. This reaction introduces a second double bond into the aromatic ring system. This Campylobacter jejuni subsp. jejuni serotype O:6 (strain 81116 / NCTC 11828) protein is Chorismate synthase.